Here is an 866-residue protein sequence, read N- to C-terminus: Autophagy-related protein 9 (866 aa).

Residues 1 to 94 (MMSSGHKGPN…KGLWCIIVKW (94 aa)) are Cytoplasmic-facing. Residues 95–115 (AVELLSLGFIICFSGFFLLYV) traverse the membrane as a helical segment. At 116–153 (DWNGLQNAKCGMDAVESGTKPCDLVKEAIHPHPLSPFT) the chain is on the lumenal side. The chain crosses the membrane as a helical span at residues 154-174 (LTTAIIVGYLALFSVYWLFCF). At 175 to 319 (LRFFAQLKDT…VSNPTTLKKR (145 aa)) the chain is on the cytoplasmic side. An intramembrane segment occupies 320–340 (LFVVGLAMLLLSPFLVIFMLV). Over 341 to 404 (YLFLRHAEQF…LKQFPSPIIS (64 aa)) the chain is Cytoplasmic. Residues 405–425 (IIAKFVSFVSGGFAAVLIIIA) form a helical membrane-spanning segment. Topologically, residues 426–433 (FLEESLLE) are lumenal. A helical membrane pass occupies residues 434–454 (GHIFGRNLFWYAAVFGTITAI). The Cytoplasmic segment spans residues 455-507 (SRAAISDELLVLDPVGTMSLVVQNTHYMPKRWRGKENKDDVRLELETLFQYTG). An intramembrane segment occupies 508–528 (MMLLEEIASIFITPFLLMFVV). The Cytoplasmic portion of the chain corresponds to 529–866 (PKRVDDILQF…ETSTSSTTLR (338 aa)). The disordered stretch occupies residues 744 to 781 (QPEGEDSYGSQHPLDGRNQWWGRGNHSQISTAHPATTN). Residues 768–781 (NHSQISTAHPATTN) show a composition bias toward polar residues.

Belongs to the ATG9 family. In terms of assembly, homotrimer; forms a homotrimer with a central pore that forms a path between the two membrane leaflets. In terms of tissue distribution, expressed in roots, leaves, stems and flowers.

Its subcellular location is the preautophagosomal structure membrane. Phospholipid scramblase involved in autophagy by mediating autophagosomal membrane expansion. Cycles between the preautophagosomal structure/phagophore assembly site (PAS) and the cytoplasmic vesicle pool and supplies membrane for the growing autophagosome. Lipid scramblase activity plays a key role in preautophagosomal structure/phagophore assembly by distributing the phospholipids that arrive through ATG2 from the cytoplasmic to the luminal leaflet of the bilayer, thereby driving autophagosomal membrane expansion. In addition to autophagy, also plays a role in necrotic cell death. Plays an essential role in plant nutrient recycling. The sequence is that of Autophagy-related protein 9 from Arabidopsis thaliana (Mouse-ear cress).